A 205-amino-acid polypeptide reads, in one-letter code: Orotate phosphoribosyltransferase (205 aa).

A 5-phospho-alpha-D-ribose 1-diphosphate-binding site is contributed by Glu116 to Ser124. Orotate-binding residues include Thr120 and Arg148.

It belongs to the purine/pyrimidine phosphoribosyltransferase family. PyrE subfamily. As to quaternary structure, homodimer. Mg(2+) serves as cofactor.

The enzyme catalyses orotidine 5'-phosphate + diphosphate = orotate + 5-phospho-alpha-D-ribose 1-diphosphate. It functions in the pathway pyrimidine metabolism; UMP biosynthesis via de novo pathway; UMP from orotate: step 1/2. Its function is as follows. Catalyzes the transfer of a ribosyl phosphate group from 5-phosphoribose 1-diphosphate to orotate, leading to the formation of orotidine monophosphate (OMP). The sequence is that of Orotate phosphoribosyltransferase from Wolinella succinogenes (strain ATCC 29543 / DSM 1740 / CCUG 13145 / JCM 31913 / LMG 7466 / NCTC 11488 / FDC 602W) (Vibrio succinogenes).